Reading from the N-terminus, the 524-residue chain is Cytochrome P450 6k1 (524 aa).

Cys464 lines the heme pocket.

The protein belongs to the cytochrome P450 family. Requires heme as cofactor.

It is found in the endoplasmic reticulum membrane. Its subcellular location is the microsome membrane. The protein is Cytochrome P450 6k1 (CYP6K1) of Blattella germanica (German cockroach).